The primary structure comprises 95 residues: Acylphosphatase (95 aa).

The Acylphosphatase-like domain maps to 6-94; sequence RVRVIVKGIV…EDFTGFSVRY (89 aa). Active-site residues include Arg-21 and Asn-39.

Belongs to the acylphosphatase family.

The catalysed reaction is an acyl phosphate + H2O = a carboxylate + phosphate + H(+). The chain is Acylphosphatase (acyP) from Caldivirga maquilingensis (strain ATCC 700844 / DSM 13496 / JCM 10307 / IC-167).